Reading from the N-terminus, the 177-residue chain is ATP synthase subunit delta (177 aa).

The protein belongs to the ATPase delta chain family. In terms of assembly, F-type ATPases have 2 components, F(1) - the catalytic core - and F(0) - the membrane proton channel. F(1) has five subunits: alpha(3), beta(3), gamma(1), delta(1), epsilon(1). F(0) has three main subunits: a(1), b(2) and c(10-14). The alpha and beta chains form an alternating ring which encloses part of the gamma chain. F(1) is attached to F(0) by a central stalk formed by the gamma and epsilon chains, while a peripheral stalk is formed by the delta and b chains.

The protein localises to the cell inner membrane. F(1)F(0) ATP synthase produces ATP from ADP in the presence of a proton or sodium gradient. F-type ATPases consist of two structural domains, F(1) containing the extramembraneous catalytic core and F(0) containing the membrane proton channel, linked together by a central stalk and a peripheral stalk. During catalysis, ATP synthesis in the catalytic domain of F(1) is coupled via a rotary mechanism of the central stalk subunits to proton translocation. Its function is as follows. This protein is part of the stalk that links CF(0) to CF(1). It either transmits conformational changes from CF(0) to CF(1) or is implicated in proton conduction. This chain is ATP synthase subunit delta, found in Photorhabdus laumondii subsp. laumondii (strain DSM 15139 / CIP 105565 / TT01) (Photorhabdus luminescens subsp. laumondii).